A 759-amino-acid polypeptide reads, in one-letter code: Protein transport protein sec23-1 (759 aa).

Zn(2+)-binding residues include Cys56, Cys60, Cys79, and Cys82.

It belongs to the SEC23/SEC24 family. SEC23 subfamily. The COPII coat is composed of at least 5 proteins: the sec23/24 complex, the sec13/31 complex, and the protein sar1.

It localises to the cytoplasm. It is found in the cytoplasmic vesicle. Its subcellular location is the COPII-coated vesicle membrane. The protein resides in the endoplasmic reticulum membrane. The protein localises to the golgi apparatus membrane. Its function is as follows. Component of the coat protein complex II (COPII) which promotes the formation of transport vesicles from the endoplasmic reticulum (ER). The coat has two main functions, the physical deformation of the endoplasmic reticulum membrane into vesicles and the selection of cargo molecules. This is Protein transport protein sec23-1 (sec231) from Schizosaccharomyces pombe (strain 972 / ATCC 24843) (Fission yeast).